The primary structure comprises 976 residues: Chitin synthase 3A (976 aa).

A disordered region spans residues 29 to 72 (DDANASNRSPVSNPYEPDYDQLSPPPMLGAQRPVPEQNESSRDL). Residues 31 to 40 (ANASNRSPVS) show a composition bias toward polar residues. N-linked (GlcNAc...) asparagine glycans are attached at residues Asn32, Asn66, Asn95, and Asn602. Transmembrane regions (helical) follow at residues 639 to 659 (LLNV…TTII), 684 to 704 (IVNV…FVLA), 717 to 737 (VLSF…TGYL), 773 to 793 (LIII…FLYL), 801 to 821 (SFPQ…VYAF), 903 to 923 (TGLV…VTTD), and 944 to 964 (FLLY…LWFI).

Belongs to the chitin synthase family. Class III subfamily.

The protein resides in the cell membrane. It carries out the reaction [(1-&gt;4)-N-acetyl-beta-D-glucosaminyl](n) + UDP-N-acetyl-alpha-D-glucosamine = [(1-&gt;4)-N-acetyl-beta-D-glucosaminyl](n+1) + UDP + H(+). In terms of biological role, polymerizes chitin, a structural polymer of the cell wall and septum, by transferring the sugar moiety of UDP-GlcNAc to the non-reducing end of the growing chitin polymer. Shows additive effects in septum formation with CHS1, CHS2, CHS4, CHS5, CHS6 and CHS7. Involved in virulence and mediates mycotoxin deoxinivalenol (DON) biosynthesis via the regulation of the expression of TRI4, TRI5 and TRI6. This chain is Chitin synthase 3A, found in Gibberella zeae (strain ATCC MYA-4620 / CBS 123657 / FGSC 9075 / NRRL 31084 / PH-1) (Wheat head blight fungus).